Here is a 279-residue protein sequence, read N- to C-terminus: B3 domain-containing protein Os11g0156000 (279 aa).

A DNA-binding region (TF-B3) is located at residues 38–144 (FEKPLTPSDV…DRLFIGCRRR (107 aa)). Disordered regions lie at residues 148–182 (AAAQ…YSTS) and 203–228 (HDHG…AGSA). Residues 159 to 168 (VRVAPAAQNA) are compositionally biased toward low complexity. Basic and acidic residues predominate over residues 203-219 (HDHGDMHHADESPRDTD).

The protein localises to the nucleus. The protein is B3 domain-containing protein Os11g0156000 of Oryza sativa subsp. japonica (Rice).